Consider the following 294-residue polypeptide: N-acetylmuramic acid 6-phosphate etherase (294 aa).

An SIS domain is found at 54-217 (VIKSFEEEGR…STASMIGVGK (164 aa)). The active-site Proton donor is Glu82. Glu113 is an active-site residue.

The protein belongs to the GCKR-like family. MurNAc-6-P etherase subfamily. In terms of assembly, homodimer.

It catalyses the reaction N-acetyl-D-muramate 6-phosphate + H2O = N-acetyl-D-glucosamine 6-phosphate + (R)-lactate. Its pathway is amino-sugar metabolism; N-acetylmuramate degradation. Its function is as follows. Specifically catalyzes the cleavage of the D-lactyl ether substituent of MurNAc 6-phosphate, producing GlcNAc 6-phosphate and D-lactate. This chain is N-acetylmuramic acid 6-phosphate etherase, found in Bacillus cereus (strain G9842).